A 108-amino-acid chain; its full sequence is Insulin (108 aa).

Positions 1–23 (MALWILLPLLALLILWGPDPAQA) are cleaved as a signal peptide. 2 disulfide bridges follow: Cys30–Cys94 and Cys43–Cys107. Residues 57–88 (EVEDPQVGQVELGAGPGAGSEQTLALEVARQA) constitute a propeptide, c peptide.

The protein belongs to the insulin family. As to quaternary structure, heterodimer of a B chain and an A chain linked by two disulfide bonds.

The protein localises to the secreted. Functionally, insulin decreases blood glucose concentration. It increases cell permeability to monosaccharides, amino acids and fatty acids. It accelerates glycolysis, the pentose phosphate cycle, and glycogen synthesis in liver. In Rodentia sp, this protein is Insulin (INS).